Consider the following 662-residue polypeptide: MPAVDKLLLEEALQDSPQARSLLSVFEEDAGTLTDYTNQLLQAMQRVYGAQNEMCLATQQLSRQLLAYEKQNFALGKGDEEVISTLHYFSKVMDELNGLHTELAKQLADTMVLPVIQFREKDLTEVSTLKDLFGLASSEHDLSMAKYSRLPKKKENEKAKTEIVKEVAAARRKQHLSSLQYYCALNALQYRKRAAMMEPLIGFAHGQINFFKRGAEMFSKSMDGFLSSVKDMVQSIQVELEAEADKMRVSQQELLSVSESVYTPDIDVATAQINRNLIQKTGYLNLRNKTGLVTTTWERLYFFTQGGNLMCQPRGAVAGGLIQDLDNCSVMAVDCEDRRYCFQISTPSGKPGIILQAESRKEYEEWICAVNNISRQIYLTDNPEAVAIKLNQTALQAVTPITSFGKKQESSCSSQNIKNSDIEDDNIVPKATASIPETEELIAPGTPIQFDIVLPATEFLDQNRGGRRTNPFGETEDGSFPEAEDSLLQQMFIVRFLGSMAVKTDSTAEVIYEAMRQVLAARAIHNIFRMTESHLMVTSQTLRLIDPQTQVSRACFELTSVTQFAAHQENKRLVGFVIRVPESTGEESLSTYIFESNSEGEKICYAINLGKEIIEVQKDPEALARLMLSVPLTNDGKYVLLNDQADDTGGSPSENRGAESEA.

The segment at 1-428 (MPAVDKLLLE…NSDIEDDNIV (428 aa)) is required for RAB5A binding. A BAR domain is found at 3–268 (AVDKLLLEEA…ESVYTPDIDV (266 aa)). Positions 277 to 375 (LIQKTGYLNL…WICAVNNISR (99 aa)) constitute a PH domain. A PID domain is found at 486-635 (SLLQQMFIVR…LMLSVPLTND (150 aa)). Positions 642-662 (NDQADDTGGSPSENRGAESEA) are disordered.

In terms of assembly, homodimer. Homotetramer. Binds RAB5A/Rab5 through an N-terminal domain. This interaction is essential for its recruitment to endosomal membranes as well as its role in cell proliferation. Binds subunits of the NuRD/MeCP1 complex. Interacts with FSHR; interaction is independent of follicle stimulating hormone stimulation. Interacts with APPL1; the interaction is decreased by adiponectin in a time-dependent manner. Forms a complex comprising APPL1, RUVBL2, CTNNB1, HDAC1 and HDAC2; interaction reduces interaction between CTNNB1, HDAC1, HDAC2 and RUVBL2 leading to the decrease of deacetylase activity of this complex; affects the recruitment of repressive complexes to the Wnt target genes. Interacts (via BAR domain) with TBC1D1; interaction is dependent of TBC1D1 phosphorylation at 'Ser-235'; interaction diminishes the phosphorylation of TBC1D1 at 'Thr-596', resulting in inhibition of SLC2A4 translocation and glucose uptake. Interacts with ANXA2; targets APPL2 to endosomes and acting in parallel to RAB5A. Interacts with RAB31 (in GTP-bound form); interaction contributes to or enhances recruitment of APPL2 to the phagosomes; interaction enhances Fc-gamma receptor-mediated phagocytosis through PI3K/Akt signaling in macrophages. Interacts with PIK3R1; forms a complex with PIK3R1 and APPL1. Interacts (via BAR domain) with ADIPOR1; hinders the accessibility of APPL1 to ADIPOR1; negatively regulates adiponectin signaling; ADIPOQ dissociates this interaction and facilitates the recruitment of APPL1 to ADIPOR1. Interacts (via BAR domain) with ADIPOR2; ADIPOQ dissociates this interaction. As to expression, expressed in insulin-target tissues including skeletal muscle, liver, fat, and brain. Highly expressed in kidney and pancreas. Abundantly expressed in the ventromedial hypothalamus (VMH), barely detectable in the arcuate nucleus (ARC) and paraventricular nucleus (PVN) of the hypothalamus. Also expressed in pancreatic beta-cells.

It localises to the early endosome membrane. The protein localises to the nucleus. The protein resides in the cell membrane. It is found in the endosome membrane. Its subcellular location is the cytoplasm. It localises to the cytoplasmic vesicle. The protein localises to the phagosome. The protein resides in the cell projection. It is found in the ruffle. Its subcellular location is the ruffle membrane. It localises to the phagosome membrane. Multifunctional adapter protein that binds to various membrane receptors, nuclear factors and signaling proteins to regulate many processes, such as cell proliferation, immune response, endosomal trafficking and cell metabolism. Regulates signaling pathway leading to cell proliferation through interaction with RAB5A and subunits of the NuRD/MeCP1 complex. Plays a role in immune response by modulating phagocytosis, inflammatory and innate immune responses. In macrophages, enhances Fc-gamma receptor-mediated phagocytosis through interaction with RAB31 leading to activation of PI3K/Akt signaling. In response to LPS, modulates inflammatory responses by playing a key role on the regulation of TLR4 signaling and in the nuclear translocation of RELA/NF-kappa-B p65 and the secretion of pro- and anti-inflammatory cytokines. Also functions as a negative regulator of innate immune response via inhibition of AKT1 signaling pathway by forming a complex with APPL1 and PIK3R1. Plays a role in endosomal trafficking of TGFBR1 from the endosomes to the nucleus. Plays a role in cell metabolism by regulating adiponectin and insulin signaling pathways and adaptative thermogenesis. In muscle, negatively regulates adiponectin-simulated glucose uptake and fatty acid oxidation by inhibiting adiponectin signaling pathway through APPL1 sequestration thereby antagonizing APPL1 action. In muscles, negatively regulates insulin-induced plasma membrane recruitment of GLUT4 and glucose uptake through interaction with TBC1D1. Plays a role in cold and diet-induced adaptive thermogenesis by activating ventromedial hypothalamus (VMH) neurons throught AMPK inhibition which enhances sympathetic outflow to subcutaneous white adipose tissue (sWAT), sWAT beiging and cold tolerance. Also plays a role in other signaling pathways namely Wnt/beta-catenin, HGF and glucocorticoid receptor signaling. Positive regulator of beta-catenin/TCF-dependent transcription through direct interaction with RUVBL2/reptin resulting in the relief of RUVBL2-mediated repression of beta-catenin/TCF target genes by modulating the interactions within the beta-catenin-reptin-HDAC complex. May affect adult neurogenesis in hippocampus and olfactory system via regulating the sensitivity of glucocorticoid receptor. Required for fibroblast migration through HGF cell signaling. This is DCC-interacting protein 13-beta from Mus musculus (Mouse).